The chain runs to 252 residues: MLTKRIVAALDIKEGRVVKGVQFENIRDAGDPVELAKKYEKDGVDEIVFLDITASKEKRNILKNLVEEIAKELFIPFTVGGGLKTVEQMVEIIKCGADKVFINSAAVENPNLIKESSKIIGSSNVVVAIDAKKDVESEKYYVYTHGGSKKTDLDAVEWARKCQELGAGELLVTSMNTDGVKKGYDLNLTKQIVDAVEIPVIASGGAGEVKDFIDVFQIGADAALAASIFHYGIYTAKDLKIQLKKVGINVRL.

Catalysis depends on residues Asp-11 and Asp-130.

This sequence belongs to the HisA/HisF family. As to quaternary structure, heterodimer of HisH and HisF.

The protein localises to the cytoplasm. The enzyme catalyses 5-[(5-phospho-1-deoxy-D-ribulos-1-ylimino)methylamino]-1-(5-phospho-beta-D-ribosyl)imidazole-4-carboxamide + L-glutamine = D-erythro-1-(imidazol-4-yl)glycerol 3-phosphate + 5-amino-1-(5-phospho-beta-D-ribosyl)imidazole-4-carboxamide + L-glutamate + H(+). Its pathway is amino-acid biosynthesis; L-histidine biosynthesis; L-histidine from 5-phospho-alpha-D-ribose 1-diphosphate: step 5/9. IGPS catalyzes the conversion of PRFAR and glutamine to IGP, AICAR and glutamate. The HisF subunit catalyzes the cyclization activity that produces IGP and AICAR from PRFAR using the ammonia provided by the HisH subunit. The chain is Imidazole glycerol phosphate synthase subunit HisF from Petrotoga mobilis (strain DSM 10674 / SJ95).